A 614-amino-acid chain; its full sequence is Zinc metalloproteinase-disintegrin-like protein F1 (614 aa).

The first 20 residues, 1-20, serve as a signal peptide directing secretion; it reads MLQVLLVTICLAVFPYQGSS. The propeptide occupies 21–192; it reads IILESGNVND…IKASQFILTP (172 aa). A Cys-switch; controls maturation motif is present at residues 167–173; it reads PKKCGVT. A Pyrrolidone carboxylic acid (Glu) modification is found at E193. Residues 202–398 enclose the Peptidase M12B domain; the sequence is KYIKLAIVVD…HTPRCILNEP (197 aa). N-linked (GlcNAc...) asparagine glycosylation is present at N221. Disulfide bonds link C313–C393, C353–C377, and C355–C360. H338 provides a ligand contact to Zn(2+). Residues 338 to 349 carry the Metal-binding motif; that stretch reads HELGHNLGINHD. E339 serves as the catalytic Proton acceptor. Zn(2+) is bound by residues H342 and H348. One can recognise a Disintegrin domain in the interval 406–492; it reads PAVCGNYVVE…ECPMDHIQKN (87 aa). V408, N411, E415, E418, and D421 together coordinate Ca(2+). 14 disulfide bridges follow: C409/C438, C420/C433, C422/C428, C432/C455, C446/C452, C451/C477, C464/C484, C471/C503, C496/C508, C515/C565, C530/C575, C543/C553, C560/C601, and C595/C607. The short motif at 470-472 is the D/ECD-tripeptide element; that stretch reads ECD. The Ca(2+) site is built by D472, E475, and D487. An N-linked (GlcNAc...) asparagine glycan is attached at N534.

It belongs to the venom metalloproteinase (M12B) family. P-III subfamily. P-IIIa sub-subfamily. Monomer. Requires Zn(2+) as cofactor. N-glycosylated. Post-translationally, the N-terminus is blocked. In terms of tissue distribution, expressed by the venom gland (at protein level). Expressed by the venom gland.

It is found in the secreted. Its activity is regulated as follows. The alpha-fibrinogenase activity is inhibited by EDTA, but not by pefabloc. In terms of biological role, zinc metalloprotease that has fibrinogenolytic activity. Does not have hemorrhagic activity in rats. Cleaves insulin B chain at '38-Ala-|-Leu-39' and '40-Tyr-|-Leu-41' bonds. Hydrolyzes only partially and weakly isolated extracellular matrix (ECM) bovine fibronectin and basal membrane (BM) protein human collagen IV in vitro. Murine laminin is not hydrolyzed, neither isolated nor in a solubilized BM preparation. Nidogen is hydrolyzed at '350-Ser-|-Phe-351' bond in a solubilized BM preparation. Hydrolyzes plasma proteins involved in blood coagulation in vitro. Has alpha-fibrinogenase activity cleaving human fibrinogen alpha chain at '432-Lys-|-Leu-433' bond, but does not cleave beta or gamma chains. Does not cleave fibrin. Hydrolyzes only partially bovine prothrombin at '200-Ser-|-Gly-201' bond, factor X (FX) heavy chain, and very slowly, FX light chain and plasminogen in vitro, without activating any of them. Has no effect in plasma thrombin generation. Does not inhibit platelet aggregation induced by collagen in vitro. May have a delayed pathological action as an anticoagulant in envenomed patients after they received serotherapy as it is not recognized by the venom antiserum. This Vipera ammodytes ammodytes (Western sand viper) protein is Zinc metalloproteinase-disintegrin-like protein F1.